The sequence spans 570 residues: A-type ATP synthase subunit A (570 aa).

223 to 230 (GPFGSGKT) contributes to the ATP binding site.

It belongs to the ATPase alpha/beta chains family. As to quaternary structure, has multiple subunits with at least A(3), B(3), C, D, E, F, H, I and proteolipid K(x).

It is found in the cell membrane. The enzyme catalyses ATP + H2O + 4 H(+)(in) = ADP + phosphate + 5 H(+)(out). Functionally, component of the A-type ATP synthase that produces ATP from ADP in the presence of a proton gradient across the membrane. The A chain is the catalytic subunit. The chain is A-type ATP synthase subunit A from Nanoarchaeum equitans (strain Kin4-M).